The following is a 1508-amino-acid chain: Calponin homology domain-containing protein DDB_G0272472 (1508 aa).

Disordered stretches follow at residues 1–165, 197–290, 309–518, 531–561, 680–706, and 1036–1391; these read MFRN…KNDF, DSEE…NLSP, DFKS…TSIV, AANA…LFND, KEKQ…EKEL, and KIEK…KKSA. Positions 81 to 107 are enriched in low complexity; the sequence is SSSPSTSTTTTTKSSSTTTTTTTSSSS. Basic and acidic residues predominate over residues 208–222; that stretch reads PIKKKQSNDLEKNIF. 3 stretches are compositionally biased toward low complexity: residues 234–251, 263–290, and 315–332; these read KQST…QKQP, FGDS…NLSP, and SNNT…KSKP. Basic and acidic residues-rich tracts occupy residues 337–346 and 362–371; these read QKEEIKEVST and VDEKPKERST. Residues 380–391 are compositionally biased toward polar residues; sequence KTVTVKSNNSFE. Positions 395–438 are enriched in low complexity; the sequence is FGSTTTNDDGGDNDFSFTPATTPSSSSSTKATTTSPSSTTTTKS. Polar residues predominate over residues 439–452; that stretch reads NINIGQKSNKSVDQ. Residues 455–498 adopt a coiled-coil conformation; it reads QFLNDIFQQEEQDKKRREEEAKLKQQQKQKEKEQIKDEIDDLFK. The span at 465–498 shows a compositional bias: basic and acidic residues; sequence EQDKKRREEEAKLKQQQKQKEKEQIKDEIDDLFK. Low complexity-rich tracts occupy residues 500-516 and 531-557; these read SKPT…STTS and AANA…KSTN. Residues 1036–1164 show a composition bias toward basic and acidic residues; that stretch reads KIEKEKEERD…DQEEKEKQLK (129 aa). Composition is skewed to low complexity over residues 1165-1181 and 1189-1206; these read EQQQ…TTTT and DSDA…SSHS. The segment covering 1216–1225 has biased composition (basic residues); sequence SKAKGRKKPT. Residues 1226–1235 are compositionally biased toward basic and acidic residues; the sequence is RRELTKDGNR. The segment covering 1333–1355 has biased composition (low complexity); the sequence is PTVTQTTTTTTTPPTTPPSSSVQ. The span at 1362–1374 shows a compositional bias: polar residues; sequence RSFSGSSFMGINS. The 108-residue stretch at 1397 to 1504 folds into the Calponin-homology (CH) domain; sequence MKALDVLLQW…YLSEFFKVMK (108 aa).

This is Calponin homology domain-containing protein DDB_G0272472 from Dictyostelium discoideum (Social amoeba).